Reading from the N-terminus, the 392-residue chain is Xyloside xylosyltransferase 1 (392 aa).

Topologically, residues 1 to 19 are cytoplasmic; that stretch reads MGLLRGGAACARAMARLGA. The chain crosses the membrane as a helical; Signal-anchor for type II membrane protein span at residues 20 to 42; it reads LRSHYCALLLAAALAVCAFYYLG. The Lumenal segment spans residues 43–392; it reads SGRETFSSAT…GNCNTPIPED (350 aa). UDP-alpha-D-xylose is bound at residue 103 to 105; the sequence is MFT. Position 225 (aspartate 225) interacts with Mn(2+). Residue leucine 226 coordinates UDP-alpha-D-xylose. Aspartate 227 is a Mn(2+) binding site. Residues 262–265 form an interaction with target proteins region; the sequence is HTFW. Residues serine 289, leucine 327, and glutamine 330 each contribute to the UDP-alpha-D-xylose site. A glycoprotein contacts are provided by glutamine 330 and tryptophan 359. Disulfide bonds link cysteine 349–cysteine 374 and cysteine 356–cysteine 385. Residue histidine 382 coordinates Mn(2+). Asparagine 384 lines the a glycoprotein pocket.

The protein belongs to the glycosyltransferase 8 family. In terms of assembly, homodimer. Dimer formation may be essential for the retention in endoplasmic reticulum. Requires Mg(2+) as cofactor. Mn(2+) is required as a cofactor.

The protein resides in the endoplasmic reticulum membrane. The enzyme catalyses 3-O-[alpha-D-xylosyl-(1-&gt;3)-beta-D-glucosyl]-L-seryl-[EGF-like domain protein] + UDP-alpha-D-xylose = 3-O-[alpha-D-xylosyl-(1-&gt;3)-alpha-D-xylosyl-(1-&gt;3)-beta-D-glucosyl]-L-seryl-[EGF-like domain protein] + UDP + H(+). In terms of biological role, alpha-1,3-xylosyltransferase, which elongates the O-linked xylose-glucose disaccharide attached to EGF-like repeats in the extracellular domain of target proteins by catalyzing the addition of the second xylose. Known targets include Notch proteins and coagulation factors, such as F9. This Mus musculus (Mouse) protein is Xyloside xylosyltransferase 1 (Xxylt1).